The following is a 273-amino-acid chain: UPF0380 protein YfjQ (273 aa).

It belongs to the UPF0380 family.

The sequence is that of UPF0380 protein YfjQ (yfjQ) from Escherichia coli (strain K12).